The chain runs to 94 residues: Large ribosomal subunit protein bL25 (94 aa).

The protein belongs to the bacterial ribosomal protein bL25 family. Part of the 50S ribosomal subunit; part of the 5S rRNA/L5/L18/L25 subcomplex. Contacts the 5S rRNA. Binds to the 5S rRNA independently of L5 and L18.

Functionally, this is one of the proteins that binds to the 5S RNA in the ribosome where it forms part of the central protuberance. The chain is Large ribosomal subunit protein bL25 from Klebsiella pneumoniae subsp. pneumoniae (strain ATCC 700721 / MGH 78578).